A 170-amino-acid chain; its full sequence is Centrin-2 (170 aa).

The disordered stretch occupies residues 1-21 (MQRGALRGASPTARRRLVDRP). EF-hand domains follow at residues 26–61 (DEIEEIREAFNLFDTDGSGMIDPKELKAAMQSLGFE), 62–97 (TKNPTIYQMIADLDRDSGGPIDFEEFLDAITAKLGD), 99–134 (ESREGIQKIFSLFDDDRTGTITLKNLKRVAKELGET), and 135–170 (MSEDELREMLERADSNGDGEISFEDFYAIMTKKTFP). Ca(2+)-binding residues include aspartate 39, aspartate 41, serine 43, methionine 45, and glutamate 50.

It belongs to the centrin family. In terms of assembly, monomer. Does not homooligomerize.

Its subcellular location is the cytoplasm. The protein localises to the cytoskeleton. It is found in the microtubule organizing center. It localises to the centrosome. In terms of biological role, in tachyzoites, plays an essential role in microneme secretion that ensures parasite motility and attachment to, invasion of and egress from host cells. Also involved in the architecture of the peripheral annuli where it appears to regulate the localization of PAP2. In association with the myosin motor MyoJ, involved in the constriction of the basal complex at the end of daughter cell division in an actin-dependent manner; the basal complex is a cytoskeletal structure formed at the tachyzoite basal pole during daughter cell formation. May be involved in parasite replication. In Toxoplasma gondii (strain ATCC 50611 / Me49), this protein is Centrin-2.